The sequence spans 245 residues: tRNA1(Val) (adenine(37)-N6)-methyltransferase (245 aa).

This sequence belongs to the methyltransferase superfamily. tRNA (adenine-N(6)-)-methyltransferase family.

The protein resides in the cytoplasm. It catalyses the reaction adenosine(37) in tRNA1(Val) + S-adenosyl-L-methionine = N(6)-methyladenosine(37) in tRNA1(Val) + S-adenosyl-L-homocysteine + H(+). Specifically methylates the adenine in position 37 of tRNA(1)(Val) (anticodon cmo5UAC). This is tRNA1(Val) (adenine(37)-N6)-methyltransferase from Escherichia coli O139:H28 (strain E24377A / ETEC).